We begin with the raw amino-acid sequence, 798 residues long: Integrin beta-7 (798 aa).

A signal peptide spans 1–19 (MVALPMVLVLLLVLSRGES). The Extracellular segment spans residues 20 to 723 (ELDAKIPSTG…VRPQEKGADH (704 aa)). One can recognise a PSI domain in the interval 44 to 92 (SCQPAPSCQKCILSHPSCAWCKQLNFTASGEAEARRCARREELLARGCP). 7 disulfides stabilise this stretch: cysteine 51-cysteine 476, cysteine 54-cysteine 80, cysteine 64-cysteine 91, cysteine 216-cysteine 223, cysteine 271-cysteine 311, cysteine 412-cysteine 428, and cysteine 448-cysteine 474. N-linked (GlcNAc...) asparagine glycosylation occurs at asparagine 68. The interval 98–124 (EPRGQQEVLQDQPLSQGARGEGATQLA) is disordered. In terms of domain architecture, VWFA spans 150-389 (YPVDLYYLMD…QLIMDAYNSL (240 aa)). Residues serine 161 and serine 163 each contribute to the Mg(2+) site. Residues serine 163, aspartate 166, aspartate 167, and aspartate 198 each coordinate Ca(2+). Residues asparagine 254, aspartate 256, proline 258, and glutamate 259 each coordinate Ca(2+). Glutamate 259 provides a ligand contact to Mg(2+). A glycan (N-linked (GlcNAc...) asparagine) is linked at asparagine 279. The Ca(2+) site is built by aspartate 289 and glutamate 373. Residue asparagine 434 is glycosylated (N-linked (GlcNAc...) asparagine). The N-linked (GlcNAc...) asparagine glycan is linked to asparagine 477. 19 cysteine pairs are disulfide-bonded: cysteine 478–cysteine 497, cysteine 488–cysteine 500, cysteine 502–cysteine 511, cysteine 513–cysteine 545, cysteine 527–cysteine 543, cysteine 537–cysteine 548, cysteine 550–cysteine 559, cysteine 561–cysteine 582, cysteine 566–cysteine 580, cysteine 574–cysteine 585, cysteine 587–cysteine 596, cysteine 598–cysteine 621, cysteine 605–cysteine 619, cysteine 613–cysteine 624, cysteine 626–cysteine 635, cysteine 638–cysteine 641, cysteine 645–cysteine 688, cysteine 651–cysteine 670, and cysteine 654–cysteine 666. 4 I-EGF domains span residues 478-512 (CSDT…RLCE), 513-560 (CSVA…HLCE), 561-597 (CDDA…RACE), and 598-636 (CSGD…ALCD). Asparagine 531 carries N-linked (GlcNAc...) asparagine glycosylation. N-linked (GlcNAc...) asparagine glycosylation is present at asparagine 590. Asparagine 665 and asparagine 674 each carry an N-linked (GlcNAc...) asparagine glycan. A helical transmembrane segment spans residues 724–746 (TQAIVLGCVGGIVAVGLGLVLAY). The Cytoplasmic portion of the chain corresponds to 747–798 (RLSVEIYDRREYSRFEKEQQQLNWKQDSNPLYKSAITTTINPRFQEADSPTL). Phosphotyrosine; by Tyr-kinases is present on tyrosine 778.

Belongs to the integrin beta chain family. As to quaternary structure, heterodimer of an alpha and a beta subunit. ITGB7/beta-7 associates with either ITGA4/alpha-4 or ITGAE/alpha-E. Integrin ITGA4/ITGB7 interacts with MADCAM1. Integrin ITGA4/ITGB7 interacts with VCAM1 and fibronectin. Interacts with FLNA (via filamin repeats 4, 9, 12, 17, 19, 21, and 23). In terms of assembly, (Microbial infection) May interact with HIV-1 gp120. Expressed in a variety of leukocyte lines.

It is found in the cell membrane. Integrin ITGA4/ITGB7 (alpha-4/beta-7) (Peyer patches-specific homing receptor LPAM-1) is an adhesion molecule that mediates lymphocyte migration and homing to gut-associated lymphoid tissue (GALT). Integrin ITGA4/ITGB7 interacts with the cell surface adhesion molecules MADCAM1 which is normally expressed by the vascular endothelium of the gastrointestinal tract. Also interacts with VCAM1 and fibronectin, an extracellular matrix component. It recognizes one or more domains within the alternatively spliced CS-1 region of fibronectin. Interactions involve the tripeptide L-D-T in MADCAM1, and L-D-V in fibronectin. Integrin ITGAE/ITGB7 (alpha-E/beta-7, HML-1) is a receptor for E-cadherin. Its function is as follows. (Microbial infection) Binds to HIV-1 gp120, thereby allowing the virus to enter GALT, which is thought to be the major trigger of AIDS disease. Interaction would involve a tripeptide L-D-I in HIV-1 gp120. In Homo sapiens (Human), this protein is Integrin beta-7 (ITGB7).